The primary structure comprises 177 residues: Peptidyl-tRNA hydrolase 1 (177 aa).

A tRNA-binding site is contributed by Tyr-18. Catalysis depends on His-23, which acts as the Proton acceptor. The tRNA site is built by Phe-65, Asn-67, and Asn-113.

The protein belongs to the PTH family. In terms of assembly, monomer.

The protein localises to the cytoplasm. The catalysed reaction is an N-acyl-L-alpha-aminoacyl-tRNA + H2O = an N-acyl-L-amino acid + a tRNA + H(+). In terms of biological role, hydrolyzes ribosome-free peptidyl-tRNAs (with 1 or more amino acids incorporated), which drop off the ribosome during protein synthesis, or as a result of ribosome stalling. Functionally, catalyzes the release of premature peptidyl moieties from peptidyl-tRNA molecules trapped in stalled 50S ribosomal subunits, and thus maintains levels of free tRNAs and 50S ribosomes. This chain is Peptidyl-tRNA hydrolase 1, found in Corynebacterium glutamicum (strain ATCC 13032 / DSM 20300 / JCM 1318 / BCRC 11384 / CCUG 27702 / LMG 3730 / NBRC 12168 / NCIMB 10025 / NRRL B-2784 / 534).